We begin with the raw amino-acid sequence, 341 residues long: ATPase GET3 (341 aa).

34 to 41 (KGGVGKTT) is an ATP binding site. Aspartate 63 is an active-site residue. ATP is bound by residues glutamate 245 and asparagine 272. Residues cysteine 283 and cysteine 286 each coordinate Zn(2+).

It belongs to the arsA ATPase family. Homodimer.

The protein resides in the cytoplasm. It localises to the endoplasmic reticulum. Functionally, ATPase required for the post-translational delivery of tail-anchored (TA) proteins to the endoplasmic reticulum. Recognizes and selectively binds the transmembrane domain of TA proteins in the cytosol. This complex then targets to the endoplasmic reticulum by membrane-bound receptors, where the tail-anchored protein is released for insertion. This process is regulated by ATP binding and hydrolysis. ATP binding drives the homodimer towards the closed dimer state, facilitating recognition of newly synthesized TA membrane proteins. ATP hydrolysis is required for insertion. Subsequently, the homodimer reverts towards the open dimer state, lowering its affinity for the membrane-bound receptor, and returning it to the cytosol to initiate a new round of targeting. The chain is ATPase GET3 from Ajellomyces capsulatus (strain H143) (Darling's disease fungus).